The sequence spans 454 residues: Protein odr-4 homolog (454 aa).

The next 2 membrane-spanning stretches (helical) occupy residues 82 to 102 (MLPG…ELAN) and 432 to 452 (IGVI…FHYF).

This sequence belongs to the ODR-4 family. Ubiquitously expressed.

The protein localises to the membrane. Functionally, may play a role in the trafficking of a subset of G-protein coupled receptors. The protein is Protein odr-4 homolog of Homo sapiens (Human).